A 596-amino-acid chain; its full sequence is Transketolase-like protein 1 (596 aa).

Histidine 46 is a binding site for substrate. Thiamine diphosphate contacts are provided by residues serine 49 and 94 to 96 (GWL). Aspartate 126 serves as a coordination point for Mg(2+). Residues valine 127 and asparagine 156 each contribute to the thiamine diphosphate site. Mg(2+)-binding residues include asparagine 156 and leucine 158. Thiamine diphosphate-binding residues include lysine 218 and histidine 232. Substrate contacts are provided by histidine 232, arginine 292, and serine 319. Positions 340 and 366 each coordinate thiamine diphosphate. The active-site Proton donor is glutamate 340. 2 residues coordinate substrate: histidine 390 and aspartate 398. Thiamine diphosphate is bound at residue glutamine 402. Residue arginine 448 participates in substrate binding.

Belongs to the transketolase family. As to quaternary structure, homodimer. It depends on Mg(2+) as a cofactor. Ca(2+) is required as a cofactor. The cofactor is Mn(2+). Requires Co(2+) as cofactor. Thiamine diphosphate serves as cofactor.

It is found in the cytoplasm. The enzyme catalyses D-sedoheptulose 7-phosphate + D-glyceraldehyde 3-phosphate = aldehydo-D-ribose 5-phosphate + D-xylulose 5-phosphate. Catalyzes the transfer of a two-carbon ketol group from a ketose donor to an aldose acceptor, via a covalent intermediate with the cofactor thiamine pyrophosphate. In Bos taurus (Bovine), this protein is Transketolase-like protein 1 (TKTL1).